A 1040-amino-acid polypeptide reads, in one-letter code: MQVLPPSSTGGPSRLFIMRPVATTLLMVAILLAGIIGYRFLPVAALPEVDYPTIQVVTLYPGASPDVMTSAVTAPLERQFGQMSGLKQMSSQSSGGASVVTLQFQLTLPLDVAEQEVQAAINAATNLLPSDLPNPPVYSKVNPADPPIMTLAVTSTAMPMTQVEDMVETRVAQKISQVSGVGLVTLSGGQRPAVRVKLNAQAIAALGLTSETVRAAITSANVNSAKGSLDGPTRAVTLSANDQMQSVDEYRQLIIAWQNGAPVRLGDVATVEQGAENSWLGAWANKEQAIVMNVQRQPGANIISTADSIRQMLPQLTESLPKSVNVTVLSDRTTNIRASVTDTQFELMLAIALVVMIIYLFLRNVPATIIPGVAVPLSLIGTFAVMVFLDFSINNLTLMALTIATGFVVDDAIVVIENISRYIEKGEKPLAAALKGAGEIGFTIISLTFSLIAVLIPLLFMGDIVGRLFREFAVTLAVAILISAVVSLTLTPMMCARMLSQASLRKQNRFSRAAEKMFDRVIEKYGQWLAKVLNHPWLTLSVALGTLLLSIMLWVFIPKGFFPVQDNGIIQGTLQAPQSSSFASMAQRQRQVSDVILKDPAVESLTAFVGVDGTNPALNSARLQINLKPLNERDDRVQKVIARLQHAVAKVPGVDLYLQPTQDLTIDTQVSRTQYQFTLQATSLDALSTWVPQLMEKLQQLPQLSDVSSDWQDKGLVAYVNVDRDSASRLGISMADVDNALYNAFGQRLISTIYTQANQYRVVLEHNTDTTPGLAAMDTIRLTSSDGGIVPLSAIAKIEQRFAPLSINHLDQFPVTTFSFNVPDNYSLGDAVQAILDTEKTVNLPVDITTQFQGSTLAFQAALGSTVWLIVAAVVAMYIVLGVLYESFIHPITILSTLPTAGVGALLALMIAGSELDVIAIIGIILLIGIVKKNAIMMIDFALAAEREQGMAPRDAIFQACLLRFRPILMTTLAALLGALPLMLSTGTGAELRRPLGIGMVGGLLVSQVLTLFTTPVIYLLFDRLSLYVKSRFPRQEEEA.

12 consecutive transmembrane segments (helical) span residues 25–45 (LLMV…PVAA), 342–362 (DTQF…YLFL), 369–389 (IIPG…MVFL), 396–416 (LTLM…IVVI), 440–460 (IGFT…PLLF), 472–492 (FAVT…TLTP), 537–557 (WLTL…WVFI), 863–883 (LGST…VLGV), 888–908 (FIHP…ALLA), 911–931 (IAGS…IGIV), 967–987 (PILM…LSTG), and 998–1018 (IGMV…TPVI).

This sequence belongs to the resistance-nodulation-cell division (RND) (TC 2.A.6) family. MdtB subfamily. In terms of assembly, part of a tripartite efflux system composed of MdtA, MdtB and MdtC. MdtB forms a heteromultimer with MdtC.

It is found in the cell inner membrane. This is Multidrug resistance protein MdtB from Citrobacter koseri (strain ATCC BAA-895 / CDC 4225-83 / SGSC4696).